A 346-amino-acid polypeptide reads, in one-letter code: Lysyl aminopeptidase (346 aa).

Zn(2+) is bound by residues His-63 and Asp-177. Residue Glu-207 is the Proton acceptor of the active site. 3 residues coordinate Zn(2+): Glu-208, Asp-230, and His-314.

In terms of assembly, homotetramer. Requires Zn(2+) as cofactor.

The enzyme catalyses Preferentially, release of N-terminal lysine.. Its function is as follows. Hydrolyzes di-, tri- and tetrapeptides with a lysine as the N-terminal amino acid and with Gly, Lys, Ala, Phe or Glu in the second position. This chain is Lysyl aminopeptidase, found in Pyrococcus furiosus (strain ATCC 43587 / DSM 3638 / JCM 8422 / Vc1).